Reading from the N-terminus, the 849-residue chain is Coiled-coil domain-containing protein 87 (849 aa).

A coiled-coil region spans residues 387 to 415 (RHPAAGHRLEELEKMLRNLQEEEASGQWD).

This sequence belongs to the CCDC87 family.

Its function is as follows. Plays a role in spermatogenesis, where it is important for normal sperm head morphology. Also required for the acrosome reaction and thus normal male fertility. In Homo sapiens (Human), this protein is Coiled-coil domain-containing protein 87 (CCDC87).